The following is a 1138-amino-acid chain: Pesticidal crystal protein Cry7Ab (1138 aa).

The protein belongs to the delta endotoxin family.

In terms of biological role, promotes colloidosmotic lysis by binding to the midgut epithelial cells of Coleoptera. The chain is Pesticidal crystal protein Cry7Ab (cry7Ab) from Bacillus thuringiensis serovar kumamotoensis.